The sequence spans 310 residues: RNA exonuclease 4 (310 aa).

Residues 1–11 show a composition bias toward polar residues; that stretch reads MDVNNLSSNWK. Residues 1–107 are disordered; that stretch reads MDVNNLSSNW…SKPTKVNEGR (107 aa). Basic and acidic residues-rich tracts occupy residues 44–53 and 61–70; these read QKIETIERKK and MSEGQEHGGD. Residues 83 to 93 show a composition bias toward polar residues; the sequence is HKSSTATISEQ. Residues 94–105 are compositionally biased toward basic and acidic residues; it reads SRTESKPTKVNE. The 163-residue stretch at 115–277 folds into the Exonuclease domain; the sequence is KYVAMDCEMV…YRRDKEAFER (163 aa). The interval 287 to 310 is disordered; sequence VVVDKKENGEDQKKKKKKKKPRKR. Residues 288 to 299 show a composition bias toward basic and acidic residues; sequence VVDKKENGEDQK. The segment covering 300 to 310 has biased composition (basic residues); it reads KKKKKKKPRKR.

This sequence belongs to the REXO4 family.

Its subcellular location is the nucleus. In terms of biological role, exoribonuclease involved in ribosome biosynthesis. Involved in the processing of ITS1, the internal transcribed spacer localized between the 18S and 5.8S rRNAs. This Aspergillus fumigatus (strain ATCC MYA-4609 / CBS 101355 / FGSC A1100 / Af293) (Neosartorya fumigata) protein is RNA exonuclease 4 (rex4).